The primary structure comprises 219 residues: MRTRVKICGLTREADIAQAIEAGVDAIGLICYAGSKRYVDLARAARLRREVPAFVSVVTLFVNPAPDEVRAVLDHVGPDLLQFHGDESPEDCTRYGHRFMRAFRVGAAGLDSAGAIAAACRPYHEAAGWLFDSYSSGYGGSGLTFDHSLLAEVQADAGSRPLVLAGGLNPDNIAQALALVQPWAVDVSSGVESGPGLKSADKMKEFLKRIKKVDDDLHA.

Belongs to the TrpF family.

The enzyme catalyses N-(5-phospho-beta-D-ribosyl)anthranilate = 1-(2-carboxyphenylamino)-1-deoxy-D-ribulose 5-phosphate. Its pathway is amino-acid biosynthesis; L-tryptophan biosynthesis; L-tryptophan from chorismate: step 3/5. The sequence is that of N-(5'-phosphoribosyl)anthranilate isomerase from Bordetella avium (strain 197N).